Consider the following 55-residue polypeptide: Large ribosomal subunit protein bL33 (55 aa).

The protein belongs to the bacterial ribosomal protein bL33 family.

The sequence is that of Large ribosomal subunit protein bL33 from Bartonella quintana (strain Toulouse) (Rochalimaea quintana).